A 2296-amino-acid polypeptide reads, in one-letter code: Protein Ycf2 (2296 aa).

1650–1657 (GSIGIGRS) serves as a coordination point for ATP.

Belongs to the Ycf2 family.

Its subcellular location is the plastid. The protein resides in the chloroplast stroma. Its function is as follows. Probable ATPase of unknown function. Its presence in a non-photosynthetic plant (Epifagus virginiana) and experiments in tobacco indicate that it has an essential function which is probably not related to photosynthesis. In Arabis hirsuta (Hairy rock-cress), this protein is Protein Ycf2.